The sequence spans 393 residues: Arginine biosynthesis bifunctional protein ArgJ (393 aa).

6 residues coordinate substrate: threonine 142, lysine 168, threonine 179, glutamate 265, asparagine 388, and serine 393. Threonine 179 functions as the Nucleophile in the catalytic mechanism.

The protein belongs to the ArgJ family. As to quaternary structure, heterotetramer of two alpha and two beta chains.

Its subcellular location is the cytoplasm. The enzyme catalyses N(2)-acetyl-L-ornithine + L-glutamate = N-acetyl-L-glutamate + L-ornithine. The catalysed reaction is L-glutamate + acetyl-CoA = N-acetyl-L-glutamate + CoA + H(+). It functions in the pathway amino-acid biosynthesis; L-arginine biosynthesis; L-ornithine and N-acetyl-L-glutamate from L-glutamate and N(2)-acetyl-L-ornithine (cyclic): step 1/1. The protein operates within amino-acid biosynthesis; L-arginine biosynthesis; N(2)-acetyl-L-ornithine from L-glutamate: step 1/4. Its function is as follows. Catalyzes two activities which are involved in the cyclic version of arginine biosynthesis: the synthesis of N-acetylglutamate from glutamate and acetyl-CoA as the acetyl donor, and of ornithine by transacetylation between N(2)-acetylornithine and glutamate. The polypeptide is Arginine biosynthesis bifunctional protein ArgJ (Desulfotalea psychrophila (strain LSv54 / DSM 12343)).